We begin with the raw amino-acid sequence, 415 residues long: AP-3 complex subunit mu (415 aa).

An MHD domain is found at 178-414; sequence SNEVYVDLVE…QTRAGEFDVR (237 aa).

It belongs to the adaptor complexes medium subunit family. As to quaternary structure, adaptor protein complex 3 (AP-3) is a heterotetramer composed of two large adaptins (delta-type subunit and beta-type subunit), a medium adaptin (mu-type subunit) and a small adaptin (sigma-type subunit).

It is found in the cytoplasm. The protein resides in the golgi apparatus. It localises to the cytoplasmic vesicle membrane. Its function is as follows. Part of the AP-3 complex, an adaptor-related complex which seems to be clathrin-associated. The complex is associated with the Golgi region as well as more peripheral structures. It facilitates the budding of vesicles from the Golgi membrane and may be directly involved in trafficking to the vacuole. It also functions in maintaining the identity of lytic vacuoles and in regulating the transition between storage and lytic vacuoles. The chain is AP-3 complex subunit mu (AP3M) from Arabidopsis thaliana (Mouse-ear cress).